A 136-amino-acid polypeptide reads, in one-letter code: ATP synthase epsilon chain (136 aa).

Belongs to the ATPase epsilon chain family. As to quaternary structure, F-type ATPases have 2 components, CF(1) - the catalytic core - and CF(0) - the membrane proton channel. CF(1) has five subunits: alpha(3), beta(3), gamma(1), delta(1), epsilon(1). CF(0) has three main subunits: a, b and c.

The protein localises to the cell inner membrane. Produces ATP from ADP in the presence of a proton gradient across the membrane. The sequence is that of ATP synthase epsilon chain from Myxococcus xanthus (strain DK1622).